The following is a 146-amino-acid chain: Putative pre-16S rRNA nuclease (146 aa).

The protein belongs to the YqgF nuclease family.

Its subcellular location is the cytoplasm. In terms of biological role, could be a nuclease involved in processing of the 5'-end of pre-16S rRNA. This chain is Putative pre-16S rRNA nuclease, found in Pseudomonas syringae pv. tomato (strain ATCC BAA-871 / DC3000).